The primary structure comprises 103 residues: Small ribosomal subunit protein uS10 (103 aa).

The protein belongs to the universal ribosomal protein uS10 family. In terms of assembly, part of the 30S ribosomal subunit.

In terms of biological role, involved in the binding of tRNA to the ribosomes. In Sphingopyxis alaskensis (strain DSM 13593 / LMG 18877 / RB2256) (Sphingomonas alaskensis), this protein is Small ribosomal subunit protein uS10.